A 204-amino-acid chain; its full sequence is Thymidylate kinase (204 aa).

9–16 (GIEASGKT) serves as a coordination point for ATP.

Belongs to the thymidylate kinase family.

The enzyme catalyses dTMP + ATP = dTDP + ADP. In terms of biological role, phosphorylation of dTMP to form dTDP in both de novo and salvage pathways of dTTP synthesis. The polypeptide is Thymidylate kinase (Sulfurihydrogenibium sp. (strain YO3AOP1)).